The following is a 144-amino-acid chain: Putative sugar phosphate isomerase RT0290 (144 aa).

Position 12 (H12) interacts with substrate. The active-site Proton donor is the H101. R135 provides a ligand contact to substrate.

Belongs to the LacAB/RpiB family.

The protein is Putative sugar phosphate isomerase RT0290 of Rickettsia typhi (strain ATCC VR-144 / Wilmington).